We begin with the raw amino-acid sequence, 198 residues long: uncharacterized protein (198 aa).

A coiled-coil region spans residues 20–58 (ERVRRDEELARLSADKEQAKNDLEESKRRIARLRGTVYE). The interval 144–198 (LSNRKTKNPESDRRRQSRKKKSTQIQASDEMKHRRHHVHKVHHYSQKQSSSTTRR) is disordered. The segment covering 176 to 188 (HRRHHVHKVHHYS) has biased composition (basic residues). Polar residues predominate over residues 189-198 (QKQSSSTTRR).

It is found in the nucleus. The protein localises to the nucleolus. This is an uncharacterized protein from Schizosaccharomyces pombe (strain 972 / ATCC 24843) (Fission yeast).